The sequence spans 461 residues: Aspartic proteinase NANA, chloroplast (461 aa).

An N-linked (GlcNAc...) asparagine glycan is attached at asparagine 86. In terms of domain architecture, Peptidase A1 spans 106–456 (YFTEIRVGTP…DLMASTLSFA (351 aa)). Aspartate 124 is an active-site residue. N-linked (GlcNAc...) asparagine glycosylation is present at asparagine 274. Residue aspartate 338 is part of the active site. A glycan (N-linked (GlcNAc...) asparagine) is linked at asparagine 386.

It belongs to the peptidase A1 family.

It localises to the plastid. It is found in the chloroplast. Its activity is regulated as follows. Repressed by pepstatin A. Functionally, aspartic proteinase that can use azocasein as substrate and regulates endogenous sugar levels (e.g. sucrose, glucose and fructose) by modulating starch accumulation and remobilization. Influences general morphology and development. This Arabidopsis thaliana (Mouse-ear cress) protein is Aspartic proteinase NANA, chloroplast.